Here is an 829-residue protein sequence, read N- to C-terminus: Sodium/hydrogen exchanger 3 (829 aa).

A signal peptide spans 1–26 (MWHRALGPGWKLLLALALTSLQGARG). The Extracellular segment spans residues 27-46 (AEEEPSSDGSFQVVTFKWHH). Residues 47–69 (VQDPYIIALWILVASLAKIVFHL) form a helical membrane-spanning segment. Topologically, residues 70-77 (SHKVTSIV) are cytoplasmic. The helical transmembrane segment at 78 to 97 (PESALLIVLGLVLGGIVWAA) threads the bilayer. Residues 98–106 (DHIASFTLT) are Extracellular-facing. A helical membrane pass occupies residues 107-124 (PTLFFFYLLPPIVLDAGY). The Cytoplasmic portion of the chain corresponds to 125-127 (FMP). The helical transmembrane segment at 128-163 (NRLFFGNLGTILLYAVIGTIWNAATTGLSLYGVFLS) threads the bilayer. Positions 133, 136, and 137 each coordinate a 1,2-diacyl-sn-glycero-3-phospho-(1D-myo-inositol). Topologically, residues 164–176 (GLMGELKIGLLDF) are extracellular. The chain crosses the membrane as a helical span at residues 177-198 (LLFGSLIAAVDPVAVLAVFEEV). Topologically, residues 199–200 (HV) are cytoplasmic. A helical transmembrane segment spans residues 201–232 (NEVLFIIVFGESLLNDAVTVVLYNVFESFVTL). Over 233 to 239 (GGDAVTG) the chain is Extracellular. The helical transmembrane segment at 240–274 (VDCVKGIVSFFVVSLGGTLVGVIFAFLLSLVTRFT) threads the bilayer. Topologically, residues 275–276 (KH) are cytoplasmic. A helical membrane pass occupies residues 277-299 (VRIIEPGFVFVISYLSYLTSEML). Residues 300–301 (SL) are Extracellular-facing. A helical transmembrane segment spans residues 302 to 318 (SSILAITFCGICCQKYV). Residues 319 to 325 (KANISEQ) lie on the Cytoplasmic side of the membrane. A helical membrane pass occupies residues 326–354 (SATTVRYTMKMLASGAETIIFMFLGISAV). Residues 355 to 362 (NPDIWTWN) are Extracellular-facing. A helical transmembrane segment spans residues 363–384 (TAFVLLTLVFISVYRAIGVVLQ). The Cytoplasmic portion of the chain corresponds to 385–397 (TWILNRYRMVQLE). Residue Met-393 coordinates a 1,2-diacyl-sn-glycero-3-phospho-(1D-myo-inositol). A helical membrane pass occupies residues 398–421 (TIDQVVMSYGGLRGAVAYALVVLL). The Extracellular segment spans residues 422–428 (DEKKVKE). The chain crosses the membrane as a helical span at residues 429 to 462 (KNLFVSTTLIVVFFTVIFQGLTIKPLVQWLKVKR). At 463-829 (SEHREPKLNE…QPAAPESTHM (367 aa)) the chain is on the cytoplasmic side. Positions 492, 493, and 495 each coordinate a 1,2-diacyl-sn-glycero-3-phospho-(1D-myo-inositol). Ser-550 and Ser-558 each carry phosphoserine. An interaction with EZR region spans residues 571–585 (RPSTVEASVSYFLRE). Residues 586 to 663 (NVSAVCLDMQ…RKRLESFKSA (78 aa)) are interaction with NHERF4. The interaction with AHCYL1 stretch occupies residues 587 to 691 (VSAVCLDMQS…AQKRRNSSIP (105 aa)). Phosphoserine occurs at positions 588 and 603. Phosphoserine; by SGK1 is present on Ser-659. Residues 677 to 687 (YKRERAQKRRN) show a composition bias toward basic residues. A disordered region spans residues 677–696 (YKRERAQKRRNSSIPNGKLP). Phosphoserine occurs at positions 714, 805, and 808.

It belongs to the monovalent cation:proton antiporter 1 (CPA1) transporter (TC 2.A.36) family. As to quaternary structure, homodimer. Found in the forms of complex and dynamic macromolecular complexes. Binds NHERF1 and NHERF2. Interacts with CHP1; this interaction increases trafficking and activity of SLC9A3 at the plasma membrane. Interacts with CHP2 and SHANK2. Interacts with PDZK1 (via C-terminal PDZ domain). Interacts with NHERF4 and interactions decrease in response to elevated calcium ion levels. Interacts with AHCYL1; the interaction is required for SLC9A3 activity. Interacts with EZR; interaction targets SLC9A3 to the apical membrane. Interacts with SNX27 (via PDZ domains); directs SLC9A3 membrane insertion from early endosomes to the plasma membrane. Phosphorylated by PKA, which inhibits activity. Phosphorylation at Ser-659 by SGK1 is associated with increased abundance at the cell membrane. Phosphorylation at Ser-714 by CSNK2A1 regulates SLC9A3 activity through the formation of multiple signaling complexes.

The protein localises to the apical cell membrane. Its subcellular location is the cell membrane. The protein resides in the recycling endosome membrane. It localises to the early endosome membrane. It carries out the reaction Na(+)(in) + H(+)(out) = Na(+)(out) + H(+)(in). With respect to regulation, seems to switch between active and inactive modes in response to various stimuli. Activated directly or indirectly by membrane phosphatidylinositol (PIs). Regulated by a variety of auxiliary proteins, which facilitate the maturation, cell surface expression and function of the transporter. Inhibited specifically by the drug tenapanor. Functionally, plasma membrane Na(+)/H(+) antiporter. Exchanges intracellular H(+) ions for extracellular Na(+) in 1:1 stoichiometry, playing a key role in salt and fluid absorption and pH homeostasis. Major apical Na(+)/H(+) exchanger in kidney and intestine playing an important role in renal and intestine Na(+) absorption and blood pressure regulation. This chain is Sodium/hydrogen exchanger 3, found in Mus musculus (Mouse).